The following is a 74-amino-acid chain: Small ribosomal subunit protein uS8c (74 aa).

The protein belongs to the universal ribosomal protein uS8 family. As to quaternary structure, part of the 30S ribosomal subunit.

The protein localises to the plastid. The protein resides in the chloroplast. One of the primary rRNA binding proteins, it binds directly to 16S rRNA central domain where it helps coordinate assembly of the platform of the 30S subunit. In Oenothera ammophila (Evening primerose), this protein is Small ribosomal subunit protein uS8c (rps8).